The sequence spans 230 residues: CRP-like protein Clp (230 aa).

18–139 (PSLALDAGTI…APKILYAIGV (122 aa)) provides a ligand contact to a nucleoside 3',5'-cyclic phosphate. Residues 158-230 (LDVTDRIVRT…GKTVVLYGTR (73 aa)) enclose the HTH crp-type domain. Positions 190–209 (RQELARLVGCSREMAGRVLK) form a DNA-binding region, H-T-H motif.

As to quaternary structure, homodimer.

It is found in the cytoplasm. Allosterically inhibited by cyclic di-GMP (c-di-GMP), which binds to Clp and abolishes its ability to bind its target gene promoter. Functionally, global transcriptional regulator that regulates virulence factors production by activating or repressing the expression of a large set of genes in diffusible signal factor (DSF) pathway. In Xanthomonas oryzae pv. oryzae (strain MAFF 311018), this protein is CRP-like protein Clp (clp).